A 498-amino-acid polypeptide reads, in one-letter code: Glycerol kinase (498 aa).

Residue T12 coordinates ADP. Positions 12, 13, and 14 each coordinate ATP. T12 contributes to the sn-glycerol 3-phosphate binding site. An ADP-binding site is contributed by R16. Sn-glycerol 3-phosphate is bound by residues R82, E83, Y134, and D243. Residues R82, E83, Y134, D243, and Q244 each coordinate glycerol. The ADP site is built by T265 and G308. The ATP site is built by T265, G308, Q312, and G409. G409 and N413 together coordinate ADP.

Belongs to the FGGY kinase family. As to quaternary structure, homotetramer and homodimer (in equilibrium).

It catalyses the reaction glycerol + ATP = sn-glycerol 3-phosphate + ADP + H(+). The protein operates within polyol metabolism; glycerol degradation via glycerol kinase pathway; sn-glycerol 3-phosphate from glycerol: step 1/1. Activated by phosphorylation and inhibited by fructose 1,6-bisphosphate (FBP). Its function is as follows. Key enzyme in the regulation of glycerol uptake and metabolism. Catalyzes the phosphorylation of glycerol to yield sn-glycerol 3-phosphate. The chain is Glycerol kinase from Clostridium botulinum (strain Okra / Type B1).